A 282-amino-acid chain; its full sequence is Hydrogenase expression/formation protein HoxQ (282 aa).

The protein belongs to the HupH/HyaF family.

The sequence is that of Hydrogenase expression/formation protein HoxQ (hoxQ) from Cupriavidus necator (strain ATCC 17699 / DSM 428 / KCTC 22496 / NCIMB 10442 / H16 / Stanier 337) (Ralstonia eutropha).